The sequence spans 360 residues: Tryptophan--tRNA ligase, mitochondrial (360 aa).

A mitochondrion-targeting transit peptide spans 1–18; that stretch reads MALFSVRKARECWRFIRA. Residues Gln42 and 48 to 51 each bind ATP; that span reads HLGN. Asp167 contacts L-tryptophan. ATP is bound by residues 179 to 181, Val217, and 226 to 230; these read GED and KMSKS.

Belongs to the class-I aminoacyl-tRNA synthetase family.

The protein resides in the mitochondrion matrix. It localises to the mitochondrion. It catalyses the reaction tRNA(Trp) + L-tryptophan + ATP = L-tryptophyl-tRNA(Trp) + AMP + diphosphate + H(+). Its function is as follows. Catalyzes the attachment of tryptophan to tRNA(Trp) in a two-step reaction: tryptophan is first activated by ATP to form Trp-AMP and then transferred to the acceptor end of tRNA(Trp). The chain is Tryptophan--tRNA ligase, mitochondrial (Wars2) from Mus musculus (Mouse).